The following is a 224-amino-acid chain: uncharacterized protein (224 aa).

Positions 203 to 224 are disordered; the sequence is ELKKKKKKKIKKPKEIRNQKNV. The span at 204–214 shows a compositional bias: basic residues; it reads LKKKKKKKIKK. Basic and acidic residues predominate over residues 215–224; sequence PKEIRNQKNV.

This is an uncharacterized protein from Mycoplasma genitalium (strain ATCC 33530 / DSM 19775 / NCTC 10195 / G37) (Mycoplasmoides genitalium).